Consider the following 230-residue polypeptide: N-(5'-phosphoribosyl)anthranilate isomerase (230 aa).

The protein belongs to the TrpF family.

The catalysed reaction is N-(5-phospho-beta-D-ribosyl)anthranilate = 1-(2-carboxyphenylamino)-1-deoxy-D-ribulose 5-phosphate. The protein operates within amino-acid biosynthesis; L-tryptophan biosynthesis; L-tryptophan from chorismate: step 3/5. This chain is N-(5'-phosphoribosyl)anthranilate isomerase, found in Trichodesmium erythraeum (strain IMS101).